A 331-amino-acid chain; its full sequence is Putative T-box protein 36 (331 aa).

Residues 29-210 (EITKKQWNQL…MNRFSRKRKY (182 aa)) constitute a DNA-binding region (T-box).

The protein resides in the nucleus. The sequence is that of Putative T-box protein 36 (tbx-36) from Caenorhabditis elegans.